The chain runs to 843 residues: MAEITVGQLAQQTNKEVDALLKQLKSFGIEKSSEKDTLTPTEMKTLLEKINSAKNTATRKKVTSVKLDGKHKINVSVKRKRRVAKKVEQQESTTLEQPQELETMVQEVSQQVDIVKEQDNIEQIVENKEAVKVQEQRQAEIAKPVIKDSGFKITAMPEIKIEEIVAEDDEGLAASDKQAKKKAAKKVFSEAVNTNTKYKREEEEKKSKAKKAGGKGFKKANPRQLSQLAGDLESFDEFGAKKGKLKAPKVKKQEFTKPVENTVRTVEIHEGITVSELAQKMAVKGAEIVKVLFNMGVMATINQSLDQDTAILIVEEMGHKYTLHNENALEEAVTIVDRSSYKKISRAPVVTIMGHVDHGKTSLLDYIRQTRVVAGEAGGITQHIGAYSVKTDKGSITFLDTPGHEAFTSMRARGAKSTDIVILVVAADDGVMPQTEEAIQHAKAARVPIVVAVNKIDKPEADPDKVISELAQRNVIPESWGGDVMFVNVSAKTGEGVADLLEAVLLQSEVLELEAFAEGLAEGVVIESRLEKGRGPVATVLVQNGNLKQGDNILCGTEYGRVRAMHNDLGKKIKAAGPATPVEILGLSGVPAAGDEMVVIENEKKAKELAAQRSQKQKEAKIAQEQSLKLSNMFNNMGKEGEQQVLKIILKGDVQGSVEAIRESLLKLSTDEVKVDIIASGIGAITSSDVTLAVASTAVVIGFNVRADSAAKKLAETDGVEFRYYNIIYDLIDDVKKAMSGLLSPEMKEQIIGIAEVREVYRSSKFGSIAGCMVIEGVVKRTNPIRVLRNNVVIYEGTLESLKRFKDDASEVKKGLECGIGVKNYNDVREGDQIEVFEVAKEL.

The interval 198-219 is disordered; the sequence is YKREEEEKKSKAKKAGGKGFKK. Positions 207 to 219 are enriched in basic residues; the sequence is SKAKKAGGKGFKK. One can recognise a tr-type G domain in the interval 345–512; that stretch reads SRAPVVTIMG…AVLLQSEVLE (168 aa). The segment at 354–361 is G1; it reads GHVDHGKT. GTP is bound at residue 354–361; it reads GHVDHGKT. A G2 region spans residues 379-383; the sequence is GITQH. The tract at residues 400–403 is G3; it reads DTPG. GTP is bound by residues 400-404 and 454-457; these read DTPGH and NKID. The interval 454–457 is G4; sequence NKID. The interval 490–492 is G5; that stretch reads SAK.

It belongs to the TRAFAC class translation factor GTPase superfamily. Classic translation factor GTPase family. IF-2 subfamily.

The protein localises to the cytoplasm. One of the essential components for the initiation of protein synthesis. Protects formylmethionyl-tRNA from spontaneous hydrolysis and promotes its binding to the 30S ribosomal subunits. Also involved in the hydrolysis of GTP during the formation of the 70S ribosomal complex. This is Translation initiation factor IF-2 from Francisella tularensis subsp. tularensis (strain WY96-3418).